A 1091-amino-acid chain; its full sequence is Protein diaphanous (1091 aa).

Residues 1–37 (MSRHEKTKSTGGGLLDSLFGRPSKSKGGTISSGTLAH) are disordered. Residues 1 to 56 (MSRHEKTKSTGGGLLDSLFGRPSKSKGGTISSGTLAHGGRPVSADNYVVPGVEDFE) form a basic region region. Residues 25–34 (SKGGTISSGT) show a composition bias toward low complexity. The GBD/FH3 domain occupies 59-431 (IQQLSVAELD…QIVFHKGYCD (373 aa)). A coiled-coil region spans residues 455-496 (KAKESKRSEEYEKKIEQLESAKQEAEAKAAHLEEKVKLMEAN). Disordered regions lie at residues 499–589 (AAPS…MMMG), 994–1021 (RLQE…DMDA), and 1039–1072 (GSAF…RTRV). The span at 512-572 (PMPPPPPGGG…MGGPPPPPMP (61 aa)) shows a compositional bias: pro residues. The FH1 domain occupies 512-596 (PMPPPPPGGG…MMGPMVPVLP (85 aa)). Positions 601–1001 (PKKKWDVKNP…KRRLQEAREQ (401 aa)) constitute an FH2 domain. A compositionally biased stretch (basic and acidic residues) spans 994 to 1010 (RLQEAREQSAREQQERQ). Positions 1022 to 1054 (PQTQEGVMDSLLEALQTGSAFGQRNRQARRQRP) constitute a DAD domain.

It belongs to the formin homology family. Diaphanous subfamily. As to quaternary structure, may interact (via CBD/FH3 domain) with Rho1.

The protein resides in the cytoplasm. It localises to the cytoskeleton. The protein localises to the cleavage furrow. It is found in the apical cell membrane. In terms of biological role, required for cytokinesis in both mitosis and meiosis. Has a role in actin cytoskeleton organization and is essential for many, if not all, actin-mediated events involving membrane invagination. May serve as a mediator between signaling molecules and actin organizers at specific phases of the cell cycle. Possible component of the contractile ring or may control its function. The protein is Protein diaphanous (dia) of Drosophila melanogaster (Fruit fly).